The sequence spans 578 residues: tRNA (guanine(26)-N(2))-dimethyltransferase (578 aa).

Residues 18–451 form the Trm1 methyltransferase domain; that stretch reads NVIRERNAEI…APPAVLWDIL (434 aa). Arginine 43 serves as a coordination point for S-adenosyl-L-methionine. Residues 63–92 are disordered; sequence EKALKKQRKKVKEQEDEKTTPVPEDPPVYE. Residues arginine 113 and aspartate 131 each contribute to the S-adenosyl-L-methionine site. Positions 295, 298, 335, and 338 each coordinate Zn(2+). Residues 491–578 are disordered; sequence EANPKSRKSA…PKQPKLEATA (88 aa). Over residues 564 to 578 the composition is skewed to basic and acidic residues; the sequence is DVEHLPKQPKLEATA.

Belongs to the class I-like SAM-binding methyltransferase superfamily. Trm1 family.

It carries out the reaction guanosine(26) in tRNA + 2 S-adenosyl-L-methionine = N(2)-dimethylguanosine(26) in tRNA + 2 S-adenosyl-L-homocysteine + 2 H(+). Its function is as follows. Dimethylates a single guanine residue at position 26 of most tRNAs using S-adenosyl-L-methionine as donor of the methyl groups. The sequence is that of tRNA (guanine(26)-N(2))-dimethyltransferase from Drosophila melanogaster (Fruit fly).